The primary structure comprises 155 residues: Putative pre-16S rRNA nuclease (155 aa).

The protein belongs to the YqgF nuclease family.

It is found in the cytoplasm. Could be a nuclease involved in processing of the 5'-end of pre-16S rRNA. This Paramagnetospirillum magneticum (strain ATCC 700264 / AMB-1) (Magnetospirillum magneticum) protein is Putative pre-16S rRNA nuclease.